The chain runs to 445 residues: Acyl-lipid (7-3)-desaturase (445 aa).

Positions 11–91 (VAELRAAEVA…MSKFFVGSLD (81 aa)) constitute a Cytochrome b5 heme-binding domain. Residues His50 and His73 each contribute to the heme site. 2 helical membrane-spanning segments follow: residues 126–146 (YWLK…YMLL) and 148–168 (GKTL…GLNI). The short motif at 170-174 (HDANH) is the Histidine box-1 element. The Histidine box-2 signature appears at 205–210 (HVVMHH). 3 helical membrane passes run 247 to 267 (ILPG…LELL), 283 to 303 (LFAP…ALPL), and 312 to 332 (ALCI…FFFI). The Histidine box-3 motif lies at 380–384 (QIEHH).

The protein belongs to the fatty acid desaturase type 1 family. It depends on Fe(2+) as a cofactor.

Its subcellular location is the membrane. The catalysed reaction is a (7Z,10Z,13Z,16Z,19Z)-docosapentaenoyl-containing glycerolipid + 2 Fe(II)-[cytochrome b5] + O2 + 2 H(+) = a (4Z,7Z,10Z,13Z,16Z,19Z)-docosahexaenoyl-containing glycerolipid + 2 Fe(III)-[cytochrome b5] + 2 H2O. It catalyses the reaction a (7Z,10Z,13Z,16Z)-docosatetraenoyl-containing glycerolipid + 2 Fe(II)-[cytochrome b5] + O2 + 2 H(+) = a (4Z,7Z,10Z,13Z,16Z)-docosapentaenoyl-containing glycerolipid + 2 Fe(III)-[cytochrome b5] + 2 H2O. Fatty acid desaturase that introduces a cis double bond at the 4-position in 22-carbon polyunsaturated fatty acids that contain a Delta(7) double bond, resulting in the production of delta-4 desaturated fatty acid docosahexanoic acid (DHA). Mediates desaturation of 22:5n-3 and 22:4n-6 into 22:6n-3 and 22:5n-6 respectively. The protein is Acyl-lipid (7-3)-desaturase of Diacronema lutheri (Unicellular marine alga).